Reading from the N-terminus, the 703-residue chain is Zinc finger CCCH domain-containing protein 36 (703 aa).

Disordered stretches follow at residues methionine 1 to glycine 42, leucine 112 to lysine 176, valine 204 to serine 242, and histidine 442 to glutamine 481. Residues glycine 9–glycine 25 are compositionally biased toward low complexity. Residues leucine 112–glycine 125 show a composition bias toward basic and acidic residues. Polar residues predominate over residues valine 149–proline 169. Residues lysine 176–glutamate 203 form a C3H1-type zinc finger. Residues threonine 451–glycine 468 show a composition bias toward basic and acidic residues. Positions serine 470–glutamine 481 are enriched in low complexity.

The sequence is that of Zinc finger CCCH domain-containing protein 36 from Oryza sativa subsp. japonica (Rice).